The following is a 344-amino-acid chain: MPKDKAVGIQVSQVSKQFGSFQAVKDVDLTVETGSLVALLGPSGSGKSTLLRLIAGLEQPDSGRIFLTGRDATNESVRDRQIGFVFQHYALFKHLTVRKNIAFGLELRKHTKEKVRARVEELLELVQLTGLGDRYPSQLSGGQRQRVALARALAVQPQVLLLDEPFGALDAKVRKDLRSWLRKLHDEVHVTTVFVTHDQEEAMEVADQIVVMNHGKVEQIGSPAEIYDNPATPFVMSFIGPVNVLPNSSHIFQAGGLDTPHPEVFLRPHDIEIAIDPIPETVPARIDRIVHLGWEVQAEVRLEDGQVLVAHLPRDRYRDLQLEPEQQVFVRPKQARSFPLNYSI.

Positions 9–239 (IQVSQVSKQF…PATPFVMSFI (231 aa)) constitute an ABC transporter domain. ATP is bound at residue 41 to 48 (GPSGSGKS).

The protein belongs to the ABC transporter superfamily. Sulfate/tungstate importer (TC 3.A.1.6) family. The complex is composed of two ATP-binding proteins (CysA), two transmembrane proteins (CysT and CysW) and a solute-binding protein (CysP).

The protein resides in the cell inner membrane. The catalysed reaction is sulfate(out) + ATP + H2O = sulfate(in) + ADP + phosphate + H(+). It carries out the reaction thiosulfate(out) + ATP + H2O = thiosulfate(in) + ADP + phosphate + H(+). Its function is as follows. Part of the ABC transporter complex CysAWTP involved in sulfate/thiosulfate import. Responsible for energy coupling to the transport system. This chain is Sulfate/thiosulfate import ATP-binding protein CysA, found in Synechococcus elongatus (strain ATCC 33912 / PCC 7942 / FACHB-805) (Anacystis nidulans R2).